The following is a 471-amino-acid chain: Lincomycin resistance protein LmrB (471 aa).

A run of 13 helical transmembrane segments spans residues 15–34 (PIIA…ETAL), 55–77 (LTTG…LQWF), 82–104 (LFFT…PTFA), 111–131 (VVQA…ILLI), 141–163 (MGMI…GLIL), 170–187 (WIFW…LFGM), 202–224 (DILS…SSAG), 231–253 (ATVL…RQLT), 268–290 (MFTL…MILL), 297–319 (SLAL…NGLM), 329–351 (AYGP…FFLT), 358–380 (SALT…MMPA), and 445–467 (GIQN…SLFI).

The protein belongs to the major facilitator superfamily. EmrB family.

It is found in the cell membrane. Proton-dependent transporter. May mediate the efflux of lincomycin. The sequence is that of Lincomycin resistance protein LmrB (lmrB) from Listeria innocua serovar 6a (strain ATCC BAA-680 / CLIP 11262).